Here is a 131-residue protein sequence, read N- to C-terminus: Small ribosomal subunit protein uS8 (131 aa).

Belongs to the universal ribosomal protein uS8 family. Part of the 30S ribosomal subunit. Contacts proteins S5 and S12.

Its function is as follows. One of the primary rRNA binding proteins, it binds directly to 16S rRNA central domain where it helps coordinate assembly of the platform of the 30S subunit. This Mycoplasmopsis agalactiae (strain NCTC 10123 / CIP 59.7 / PG2) (Mycoplasma agalactiae) protein is Small ribosomal subunit protein uS8.